The chain runs to 451 residues: Phosphoglucosamine mutase (451 aa).

Serine 102 (phosphoserine intermediate) is an active-site residue. Residues serine 102, aspartate 243, aspartate 245, and aspartate 247 each coordinate Mg(2+). The residue at position 102 (serine 102) is a Phosphoserine.

Belongs to the phosphohexose mutase family. The cofactor is Mg(2+). Activated by phosphorylation.

It carries out the reaction alpha-D-glucosamine 1-phosphate = D-glucosamine 6-phosphate. Its function is as follows. Catalyzes the conversion of glucosamine-6-phosphate to glucosamine-1-phosphate. This is Phosphoglucosamine mutase from Salinispora arenicola (strain CNS-205).